Reading from the N-terminus, the 87-residue chain is Neurotoxin Cex4 (87 aa).

The first 19 residues, 1–19, serve as a signal peptide directing secretion; the sequence is MNSLLMITACLFLIGTVWA. The region spanning 20–85 is the LCN-type CS-alpha/beta domain; that stretch reads KEGYLVNKST…TYPLPNKSCG (66 aa). Intrachain disulfides connect Cys31/Cys84, Cys35/Cys60, Cys44/Cys65, and Cys48/Cys67. Cys84 bears the Cysteine amide mark. The propeptide occupies 85 to 87; sequence GRK.

This sequence belongs to the long (4 C-C) scorpion toxin superfamily. Sodium channel inhibitor family. Beta subfamily. Expressed by the venom gland.

The protein resides in the secreted. Beta toxins bind voltage-independently at site-4 of sodium channels (Nav) and shift the voltage of activation toward more negative potentials thereby affecting sodium channel activation and promoting spontaneous and repetitive firing. This chain is Neurotoxin Cex4, found in Centruroides exilicauda (Bark scorpion).